Consider the following 204-residue polypeptide: 3-isopropylmalate dehydratase small subunit (204 aa).

The protein belongs to the LeuD family. LeuD type 1 subfamily. In terms of assembly, heterodimer of LeuC and LeuD.

The catalysed reaction is (2R,3S)-3-isopropylmalate = (2S)-2-isopropylmalate. It participates in amino-acid biosynthesis; L-leucine biosynthesis; L-leucine from 3-methyl-2-oxobutanoate: step 2/4. Its function is as follows. Catalyzes the isomerization between 2-isopropylmalate and 3-isopropylmalate, via the formation of 2-isopropylmaleate. The polypeptide is 3-isopropylmalate dehydratase small subunit (Chloroflexus aggregans (strain MD-66 / DSM 9485)).